Consider the following 324-residue polypeptide: [Acyl-carrier-protein] phosphodiesterase PptH (324 aa).

3 residues coordinate Mn(2+): aspartate 22, histidine 24, and aspartate 51. Fe cation contacts are provided by aspartate 51, asparagine 79, histidine 205, and histidine 246. Histidine 248 contributes to the Mn(2+) binding site.

The protein belongs to the metallophosphoesterase superfamily. The cofactor is Fe(3+). Mn(2+) serves as cofactor.

The enzyme catalyses holo-[ACP] + H2O = apo-[ACP] + (R)-4'-phosphopantetheine + H(+). Its function is as follows. Catalyzes the hydrolysis of the phosphopantetheine group from substrate holo-carrier proteins. In Mycobacterium tuberculosis (strain ATCC 25618 / H37Rv), this protein is [Acyl-carrier-protein] phosphodiesterase PptH.